Consider the following 542-residue polypeptide: Nuclear hormone receptor family member nhr-35 (542 aa).

A DNA-binding region (nuclear receptor) is located at residues 74-149 (NSICHICSDV…SGMRDDQVQS (76 aa)). 2 NR C4-type zinc fingers span residues 77 to 97 (CHICSDVATGRHYGAIACNGC) and 113 to 137 (CRFESKCEIDKHNRAVCRYCRFMKC). The NR LBD domain occupies 186–438 (EYDQLLESLL…VLMEELILAE (253 aa)). The interval 445–487 (RQDQTPCSIMNDTPSGSQDMCSPCPEDLLRTSTSSNSPTNSSL) is disordered. Polar residues predominate over residues 448–464 (QTPCSIMNDTPSGSQDM). Low complexity predominate over residues 475–487 (TSTSSNSPTNSSL).

It belongs to the nuclear hormone receptor family.

The protein localises to the nucleus. Its function is as follows. Orphan nuclear receptor. The chain is Nuclear hormone receptor family member nhr-35 (nhr-35) from Caenorhabditis elegans.